A 741-amino-acid chain; its full sequence is HSP-interacting protein (741 aa).

3 TPR repeats span residues 26–59, 65–100, and 102–134; these read SREL…LPAG, AHLR…VPRY, and RALL…EPGN. Residues 168 to 270 form a disordered region; sequence ASAKGEERKK…GESKQQKHSA (103 aa). Residues 171-184 are compositionally biased toward basic and acidic residues; it reads KGEERKKSRNKRFD. Over residues 201–218 the composition is skewed to polar residues; sequence SASTEKQAGPRQTNGTGN. The segment covering 219–247 has biased composition (basic and acidic residues); sequence HQDHTEDSESNGLEKLEQSTETGEKDMGK. Basic residues predominate over residues 248–258; it reads KRGAHAAGKKP. The 80-residue stretch at 285 to 364 folds into the PB1 domain; that stretch reads MKDVKLVFGE…VPIRFYVVEV (80 aa). 4 TPR repeats span residues 496–530, 532–557, 558–591, and 628–663; these read EFIL…KSDF, EGLI…ACKI, NMET…RLKG, and SHIN…AMEK.

As to quaternary structure, interacts (via C-terminus) with O1. Interacts (via C-terminus) with OP10 (via N-terminus).

Its function is as follows. Acts as a co-chaperone for HSP90 and is required for proper folding of the myosin motor domain. The sequence is that of HSP-interacting protein from Zea mays (Maize).